The following is a 184-amino-acid chain: ATP synthase subunit b (184 aa).

A helical membrane pass occupies residues 25–45 (IFPSWPIMLATLVSFTILLVV).

Belongs to the ATPase B chain family. F-type ATPases have 2 components, F(1) - the catalytic core - and F(0) - the membrane proton channel. F(1) has five subunits: alpha(3), beta(3), gamma(1), delta(1), epsilon(1). F(0) has three main subunits: a(1), b(2) and c(10-14). The alpha and beta chains form an alternating ring which encloses part of the gamma chain. F(1) is attached to F(0) by a central stalk formed by the gamma and epsilon chains, while a peripheral stalk is formed by the delta and b chains.

The protein localises to the cell membrane. F(1)F(0) ATP synthase produces ATP from ADP in the presence of a proton or sodium gradient. F-type ATPases consist of two structural domains, F(1) containing the extramembraneous catalytic core and F(0) containing the membrane proton channel, linked together by a central stalk and a peripheral stalk. During catalysis, ATP synthesis in the catalytic domain of F(1) is coupled via a rotary mechanism of the central stalk subunits to proton translocation. Functionally, component of the F(0) channel, it forms part of the peripheral stalk, linking F(1) to F(0). This chain is ATP synthase subunit b, found in Mycoplasma mobile (strain ATCC 43663 / 163K / NCTC 11711) (Mesomycoplasma mobile).